The sequence spans 123 residues: UPF0295 protein Bcer98_0460 (123 aa).

2 consecutive transmembrane segments (helical) span residues 12–32 and 43–63; these read IRTFALSLVFIGLLIAYLGVF and FMMLGFLAVLASTFVYFWIGM.

It belongs to the UPF0295 family.

It is found in the cell membrane. This is UPF0295 protein Bcer98_0460 from Bacillus cytotoxicus (strain DSM 22905 / CIP 110041 / 391-98 / NVH 391-98).